The chain runs to 493 residues: Protein nucleotidyltransferase YdiU (493 aa).

ATP-binding residues include G96, G98, R99, K119, D131, G132, R182, and R189. The active-site Proton acceptor is the D258. 2 residues coordinate Mg(2+): N259 and D268. D268 contacts ATP. The interval 471-493 is disordered; the sequence is EKYTEFKNPPAPKERVSQTFCGT.

The protein belongs to the SELO family. It depends on Mg(2+) as a cofactor. Mn(2+) is required as a cofactor.

It catalyses the reaction L-seryl-[protein] + ATP = 3-O-(5'-adenylyl)-L-seryl-[protein] + diphosphate. It carries out the reaction L-threonyl-[protein] + ATP = 3-O-(5'-adenylyl)-L-threonyl-[protein] + diphosphate. The enzyme catalyses L-tyrosyl-[protein] + ATP = O-(5'-adenylyl)-L-tyrosyl-[protein] + diphosphate. The catalysed reaction is L-histidyl-[protein] + UTP = N(tele)-(5'-uridylyl)-L-histidyl-[protein] + diphosphate. It catalyses the reaction L-seryl-[protein] + UTP = O-(5'-uridylyl)-L-seryl-[protein] + diphosphate. It carries out the reaction L-tyrosyl-[protein] + UTP = O-(5'-uridylyl)-L-tyrosyl-[protein] + diphosphate. Functionally, nucleotidyltransferase involved in the post-translational modification of proteins. It can catalyze the addition of adenosine monophosphate (AMP) or uridine monophosphate (UMP) to a protein, resulting in modifications known as AMPylation and UMPylation. This chain is Protein nucleotidyltransferase YdiU, found in Nitrosococcus oceani (strain ATCC 19707 / BCRC 17464 / JCM 30415 / NCIMB 11848 / C-107).